A 135-amino-acid polypeptide reads, in one-letter code: C-type lectin LmsL (135 aa).

Intrachain disulfides connect Cys-3/Cys-14, Cys-31/Cys-131, Cys-38/Cys-133, and Cys-106/Cys-123. The region spanning 10-132 is the C-type lectin domain; the sequence is MNGLCYKIFD…CESKNAFLCQ (123 aa). Gln-96, Asp-98, Glu-104, Asn-119, and Asp-120 together coordinate Ca(2+). The Galactose-binding signature appears at 96-98; sequence QPD.

It belongs to the true venom lectin family. As to quaternary structure, homodimer; disulfide-linked. In terms of tissue distribution, expressed by the venom gland.

It is found in the secreted. Its function is as follows. Galactose-binding protein which recognizes specific carbohydrate structures and agglutinates a variety of animal cells by binding to cell-surface glycoproteins and glycolipids. Is a calcium-dependent lectin. Shows high hemagglutinating activity, that is inhibited by lactose, galactose and inositol. This is C-type lectin LmsL from Lachesis stenophrys (Central American bushmaster).